The primary structure comprises 327 residues: UDP-glucose 4-epimerase (327 aa).

Substrate is bound at residue T119. Y143 serves as the catalytic Proton acceptor.

This sequence belongs to the NAD(P)-dependent epimerase/dehydratase family. NAD(+) is required as a cofactor.

It carries out the reaction UDP-alpha-D-glucose = UDP-alpha-D-galactose. It functions in the pathway carbohydrate metabolism; galactose metabolism. The protein operates within glycan metabolism; exopolysaccharide biosynthesis. This chain is UDP-glucose 4-epimerase (exoB), found in Rhizobium leguminosarum bv. trifolii.